The chain runs to 41 residues: Large ribosomal subunit protein bL36 (41 aa).

This sequence belongs to the bacterial ribosomal protein bL36 family.

This is Large ribosomal subunit protein bL36 from Orientia tsutsugamushi (strain Boryong) (Rickettsia tsutsugamushi).